The sequence spans 127 residues: Transcription initiation factor IIA subunit 2 (127 aa).

This sequence belongs to the TFIIA subunit 2 family. As to quaternary structure, TFIIA is a heterodimer composed of the large TOA1 and the small TOA2 subunits.

The protein localises to the nucleus. Functionally, TFIIA is a component of the transcription machinery of RNA polymerase II and plays an important role in transcriptional activation. TFIIA in a complex with tbp mediates transcriptional activity. This chain is Transcription initiation factor IIA subunit 2 (TOA2), found in Cryptococcus neoformans var. neoformans serotype D (strain B-3501A) (Filobasidiella neoformans).